A 715-amino-acid polypeptide reads, in one-letter code: BBSome complex member BBS7 (715 aa).

Methionine 1 carries the N-acetylmethionine modification.

As to quaternary structure, part of BBSome complex, that contains BBS1, BBS2, BBS4, BBS5, BBS7, BBS8/TTC8, BBS9 and BBIP10. Interacts with BBS2 (via C-terminus). Interacts with CCDC28B. Interacts with SMO; the interaction is indicative for the association of SMO with the BBsome complex to facilitate ciliary localization of SMO.

It localises to the cell projection. The protein localises to the cilium membrane. It is found in the cytoplasm. Its subcellular location is the cytoskeleton. The protein resides in the microtubule organizing center. It localises to the centrosome. The protein localises to the centriolar satellite. It is found in the cilium basal body. Its function is as follows. The BBSome complex is thought to function as a coat complex required for sorting of specific membrane proteins to the primary cilia. The BBSome complex is required for ciliogenesis but is dispensable for centriolar satellite function. This ciliogenic function is mediated in part by the Rab8 GDP/GTP exchange factor, which localizes to the basal body and contacts the BBSome. Rab8(GTP) enters the primary cilium and promotes extension of the ciliary membrane. Firstly the BBSome associates with the ciliary membrane and binds to RAB3IP/Rabin8, the guanosyl exchange factor (GEF) for Rab8 and then the Rab8-GTP localizes to the cilium and promotes docking and fusion of carrier vesicles to the base of the ciliary membrane. The BBSome complex, together with the LTZL1, controls SMO ciliary trafficking and contributes to the sonic hedgehog (SHH) pathway regulation. Required for BBSome complex ciliary localization but not for the proper complex assembly. The chain is BBSome complex member BBS7 (Bbs7) from Mus musculus (Mouse).